Reading from the N-terminus, the 178-residue chain is MTEHETQMGLKPRFLVVMGVSGTGKTTVATGLATRLGWHFQEGDALHPPANVEKMSTGQPLTDADRAPWLALCHDWLREQVKAGHGAVLTCSALKRSYREQLRGDDLPIEFVHIDTSTGELADRLQRREGHFMPASLLPSQLATLEVPGDDEPVIRVSGEKHPDVVLEELIRHFQAED.

Residue 19-26 participates in ATP binding; sequence GVSGTGKT.

Belongs to the gluconokinase GntK/GntV family. As to quaternary structure, monomer.

It catalyses the reaction D-gluconate + ATP = 6-phospho-D-gluconate + ADP + H(+). It functions in the pathway carbohydrate acid metabolism; D-gluconate degradation. Activated by magnesium. Phosphorylates gluconate to 6-phosphogluconate. The protein is Gluconokinase of Gluconobacter oxydans (strain 621H) (Gluconobacter suboxydans).